The following is a 265-amino-acid chain: Undecaprenyl-diphosphatase (265 aa).

8 helical membrane passes run 7 to 27, 45 to 65, 86 to 106, 108 to 128, 145 to 165, 186 to 206, 214 to 234, and 245 to 265; these read IIVS…PISS, TKIL…YFFH, LHII…YKKI, LLFN…FLLI, ISLL…YPGF, IEFS…YDFI, ILDL…SILC, and TSLI…YFIN.

It belongs to the UppP family.

It is found in the cell membrane. It carries out the reaction di-trans,octa-cis-undecaprenyl diphosphate + H2O = di-trans,octa-cis-undecaprenyl phosphate + phosphate + H(+). Functionally, catalyzes the dephosphorylation of undecaprenyl diphosphate (UPP). Confers resistance to bacitracin. This is Undecaprenyl-diphosphatase from Buchnera aphidicola subsp. Acyrthosiphon pisum (strain Tuc7).